The sequence spans 324 residues: Antihemorrhagic factor cMSF (324 aa).

The first 19 residues, 1–19 (MHFLVALVLLGQIIGSTLS), serve as a signal peptide directing secretion. Cystatin fetuin-A-type domains follow at residues 22–130 (VRGD…VKCH) and 141–254 (RNCL…SDCV). The Cell attachment site signature appears at 23–25 (RGD). 7 cysteine pairs are disulfide-bonded: Cys28–Cys315, Cys85–Cys96, Cys110–Cys129, Cys143–Cys146, Cys205–Cys217, Cys230–Cys253, and Cys287–Cys291. A glycan (N-linked (GlcNAc...) asparagine) is linked at Asn204. Asn282 is a glycosylation site (N-linked (GlcNAc...) asparagine).

In terms of assembly, homodimer. In terms of tissue distribution, expressed by the liver.

The protein resides in the secreted. In terms of biological role, suppress hemorrhage induced by metalloproteinases from the same venom (brevilysin-H3, -H4, -H6) and from habu venom (metalloproteinases HR1A and HR1B). The non-hemorrhagic brevilysin-L4 is not inhibited by cMSF. Does not inhibit serine and cysteine proteases such as trypsin, chymotrypsin, thermolysin, and papain. The inhibition may occur by formation of a non-covalent complex between this protein and the proteinases at their metalloproteinase domains. The protein is Antihemorrhagic factor cMSF of Gloydius brevicauda (Korean slamosa snake).